The following is a 271-amino-acid chain: Shikimate dehydrogenase-like protein HI_0607 (271 aa).

Lysine 67 serves as the catalytic Proton donor/acceptor. Aspartate 103 is a binding site for substrate. NADP(+)-binding positions include 126-130, lysine 154, and serine 184; that span reads GSGGM.

This sequence belongs to the shikimate dehydrogenase-like family. Homodimer.

It catalyses the reaction shikimate + NADP(+) = 3-dehydroshikimate + NADPH + H(+). Functionally, in vitro, is able to catalyze the NADP(+)-dependent oxidation of shikimate to 3-dehydroshikimate. However, has much lower activity than classical shikimate dehydrogenases AroE, indicating that shikimate may not be the biological substrate. Cannot utilize NAD(+) instead of NADP(+). Is not able to catalyze the oxidation of quinate. The polypeptide is Shikimate dehydrogenase-like protein HI_0607 (Haemophilus influenzae (strain ATCC 51907 / DSM 11121 / KW20 / Rd)).